Consider the following 299-residue polypeptide: Ribonuclease H2 subunit A (299 aa).

Position 1 is an N-acetylmethionine (M1). The region spanning 28–250 (PCVLGVDEAG…AQTILEKEAE (223 aa)) is the RNase H type-2 domain. A divalent metal cation contacts are provided by D34, E35, and D141. Phosphothreonine occurs at positions 204 and 216. A phosphoserine mark is found at S257 and S277.

This sequence belongs to the RNase HII family. Eukaryotic subfamily. As to quaternary structure, the RNase H2 complex is a heterotrimer composed of the catalytic subunit RNASEH2A and the non-catalytic subunits RNASEH2B and RNASEH2C. Requires Mn(2+) as cofactor. Mg(2+) serves as cofactor.

The protein resides in the nucleus. The catalysed reaction is Endonucleolytic cleavage to 5'-phosphomonoester.. Functionally, catalytic subunit of RNase HII, an endonuclease that specifically degrades the RNA of RNA:DNA hybrids. Participates in DNA replication, possibly by mediating the removal of lagging-strand Okazaki fragment RNA primers during DNA replication. Mediates the excision of single ribonucleotides from DNA:RNA duplexes. The protein is Ribonuclease H2 subunit A (RNASEH2A) of Homo sapiens (Human).